Reading from the N-terminus, the 683-residue chain is DNA-directed RNA polymerase subunit beta' (683 aa).

Residues cysteine 69, cysteine 71, cysteine 87, and cysteine 90 each contribute to the Zn(2+) site. Residues aspartate 489, aspartate 491, and aspartate 493 each contribute to the Mg(2+) site.

The protein belongs to the RNA polymerase beta' chain family. RpoC1 subfamily. In plastids the minimal PEP RNA polymerase catalytic core is composed of four subunits: alpha, beta, beta', and beta''. When a (nuclear-encoded) sigma factor is associated with the core the holoenzyme is formed, which can initiate transcription. The cofactor is Mg(2+). Zn(2+) is required as a cofactor.

It is found in the plastid. The protein resides in the chloroplast. It catalyses the reaction RNA(n) + a ribonucleoside 5'-triphosphate = RNA(n+1) + diphosphate. DNA-dependent RNA polymerase catalyzes the transcription of DNA into RNA using the four ribonucleoside triphosphates as substrates. In Saccharum hybrid (Sugarcane), this protein is DNA-directed RNA polymerase subunit beta'.